A 481-amino-acid polypeptide reads, in one-letter code: tRNA pseudouridine(38/39) synthase (481 aa).

The residue at position 2 (alanine 2) is an N-acetylalanine. Basic and acidic residues predominate over residues 29–40 (KKEQANNKDSNI). Residues 29–54 (KKEQANNKDSNIRENSSGAGGKPKRA) are disordered. The Nucleophile role is filled by aspartate 118. A substrate-binding site is contributed by tyrosine 195. Position 456 is a phosphothreonine (threonine 456).

It belongs to the tRNA pseudouridine synthase TruA family.

It localises to the nucleus. It carries out the reaction uridine(38/39) in tRNA = pseudouridine(38/39) in tRNA. In terms of biological role, formation of pseudouridine at position 39 in the anticodon stem and loop of transfer RNAs. The sequence is that of tRNA pseudouridine(38/39) synthase (PUS3) from Bos taurus (Bovine).